Consider the following 506-residue polypeptide: Deoxyribodipyrimidine photo-lyase (506 aa).

The segment covering 1–21 has biased composition (pro residues); the sequence is MPPTSVSPPRTAPGPANPSPA. The segment at 1–33 is disordered; that stretch reads MPPTSVSPPRTAPGPANPSPAHPSRVRVIHPGG. Residues 38 to 171 form the Photolyase/cryptochrome alpha/beta domain; that stretch reads GPVVYWMLRD…AVHQVDAHNV (134 aa). Residues tyrosine 268 and 282–285 each bind FAD; that span reads SGLS. Position 312 is a phosphoserine (serine 312). FAD contacts are provided by residues 319-327, lysine 390, asparagine 421, aspartate 427, and 427-429; these read ELVVRRELA and DGR. The segment at 487 to 506 is disordered; that stretch reads KKRNAEESPNPVVKLSKSQH.

The protein belongs to the DNA photolyase class-2 family. It depends on FAD as a cofactor. Expressed in proliferating tissues. Highly expressed in roots and shoot apical meristem (SAM). Expressed in leaves, flag leaves, and panicle.

Its subcellular location is the nucleus. It catalyses the reaction cyclobutadipyrimidine (in DNA) = 2 pyrimidine residues (in DNA).. Its function is as follows. Involved in repair of UV radiation-induced DNA damage. Catalyzes the light-dependent monomerization (300-600 nm) of cyclobutylpyrimidine dimers (CPDs), which are formed between adjacent bases on the same DNA strand upon exposure to ultraviolet radiation. Required for plant survival in the presence of UV-B light. Not involved in the repair of (6-4) photoproducts. The chain is Deoxyribodipyrimidine photo-lyase (PHR) from Oryza sativa subsp. japonica (Rice).